Here is a 189-residue protein sequence, read N- to C-terminus: Ribose 1,5-bisphosphate phosphokinase PhnN (189 aa).

ATP is bound at residue 10–17; the sequence is GPSGSGKD.

Belongs to the ribose 1,5-bisphosphokinase family.

The enzyme catalyses alpha-D-ribose 1,5-bisphosphate + ATP = 5-phospho-alpha-D-ribose 1-diphosphate + ADP. The protein operates within metabolic intermediate biosynthesis; 5-phospho-alpha-D-ribose 1-diphosphate biosynthesis; 5-phospho-alpha-D-ribose 1-diphosphate from D-ribose 5-phosphate (route II): step 3/3. Catalyzes the phosphorylation of ribose 1,5-bisphosphate to 5-phospho-D-ribosyl alpha-1-diphosphate (PRPP). The sequence is that of Ribose 1,5-bisphosphate phosphokinase PhnN from Enterobacter lignolyticus (strain SCF1).